Consider the following 86-residue polypeptide: U15-lycotoxin-Ls1d (86 aa).

The first 20 residues, 1–20 (MNSKIFAVLFLLAFLSCVLS), serve as a signal peptide directing secretion. The 46-residue stretch at 21–66 (DQYCPKSSITACKKMNIRNDCCKDDDCTGGSWCCATPCGNFCKYPT) folds into the WAP domain. 5 disulfides stabilise this stretch: Cys-24-Cys-54, Cys-32-Cys-58, Cys-41-Cys-53, Cys-42-Cys-80, and Cys-47-Cys-62.

The protein belongs to the venom protein 11 family. 01 (wap-1) subfamily. In terms of processing, contains 5 disulfide bonds. In terms of tissue distribution, expressed by the venom gland.

The protein localises to the secreted. Has antibacterial activity. The sequence is that of U15-lycotoxin-Ls1d from Lycosa singoriensis (Wolf spider).